Reading from the N-terminus, the 235-residue chain is 2-C-methyl-D-erythritol 4-phosphate cytidylyltransferase (235 aa).

Belongs to the IspD/TarI cytidylyltransferase family. IspD subfamily.

It catalyses the reaction 2-C-methyl-D-erythritol 4-phosphate + CTP + H(+) = 4-CDP-2-C-methyl-D-erythritol + diphosphate. Its pathway is isoprenoid biosynthesis; isopentenyl diphosphate biosynthesis via DXP pathway; isopentenyl diphosphate from 1-deoxy-D-xylulose 5-phosphate: step 2/6. Functionally, catalyzes the formation of 4-diphosphocytidyl-2-C-methyl-D-erythritol from CTP and 2-C-methyl-D-erythritol 4-phosphate (MEP). This is 2-C-methyl-D-erythritol 4-phosphate cytidylyltransferase from Pseudomonas entomophila (strain L48).